Here is a 522-residue protein sequence, read N- to C-terminus: Peptide chain release factor 3 (522 aa).

The tr-type G domain maps to 9-276; it reads KKRRTFAIIS…SFVNLAPAPQ (268 aa). GTP contacts are provided by residues 18–25, 86–90, and 140–143; these read SHPDAGKT, DTPGH, and NKLD.

Belongs to the TRAFAC class translation factor GTPase superfamily. Classic translation factor GTPase family. PrfC subfamily.

The protein localises to the cytoplasm. Its function is as follows. Increases the formation of ribosomal termination complexes and stimulates activities of RF-1 and RF-2. It binds guanine nucleotides and has strong preference for UGA stop codons. It may interact directly with the ribosome. The stimulation of RF-1 and RF-2 is significantly reduced by GTP and GDP, but not by GMP. The sequence is that of Peptide chain release factor 3 from Lactobacillus gasseri (strain ATCC 33323 / DSM 20243 / BCRC 14619 / CIP 102991 / JCM 1131 / KCTC 3163 / NCIMB 11718 / NCTC 13722 / AM63).